The primary structure comprises 226 residues: Ribonuclease 3 (226 aa).

The RNase III domain occupies 6 to 128 (INRLQRKLGY…LIGGIFLDSD (123 aa)). Glutamate 41 is a Mg(2+) binding site. Residue aspartate 45 is part of the active site. 2 residues coordinate Mg(2+): aspartate 114 and glutamate 117. Residue glutamate 117 is part of the active site. The DRBM domain occupies 155–225 (DPKTRLQEYL…AEQALKQLEL (71 aa)).

It belongs to the ribonuclease III family. In terms of assembly, homodimer. It depends on Mg(2+) as a cofactor.

The protein resides in the cytoplasm. It catalyses the reaction Endonucleolytic cleavage to 5'-phosphomonoester.. In terms of biological role, digests double-stranded RNA. Involved in the processing of primary rRNA transcript to yield the immediate precursors to the large and small rRNAs (23S and 16S). Processes some mRNAs, and tRNAs when they are encoded in the rRNA operon. Processes pre-crRNA and tracrRNA of type II CRISPR loci if present in the organism. The polypeptide is Ribonuclease 3 (Yersinia enterocolitica serotype O:8 / biotype 1B (strain NCTC 13174 / 8081)).